Here is a 277-residue protein sequence, read N- to C-terminus: Elongation factor 1-delta (277 aa).

An N-acetylalanine modification is found at A2. An N6-acetyllysine modification is found at K17. S37, S44, S60, S86, and S106 each carry phosphoserine. Position 107 is an N6-acetyllysine (K107). Positions 113–171 (SALEKSSPAHRATTPQTQHVSPMRQVEPPSRKAATATEDDEDDDIDLFGSDEEEDKEAA) are disordered. The residue at position 117 (K117) is an N6-acetyllysine; alternate. Position 117 is an N6-succinyllysine; alternate (K117). Residue S119 is modified to Phosphoserine. T129 carries the phosphothreonine modification. A Phosphoserine modification is found at S133. T147 carries the phosphothreonine modification. Over residues 149–168 (TEDDEDDDIDLFGSDEEEDK) the composition is skewed to acidic residues. Residue S162 is modified to Phosphoserine; by CK2.

The protein belongs to the EF-1-beta/EF-1-delta family. In terms of assembly, EF-1 is composed of 4 subunits: alpha, beta, delta, and gamma.

In terms of biological role, EF-1-beta and EF-1-delta stimulate the exchange of GDP bound to EF-1-alpha to GTP. The protein is Elongation factor 1-delta (EEF1D) of Ovis aries (Sheep).